The following is a 308-amino-acid chain: Energy-coupling factor transporter ATP-binding protein EcfA2 (308 aa).

Residues isoleucine 3–glutamate 263 form the ABC transporter domain. Glycine 40–threonine 47 is a binding site for ATP.

Belongs to the ABC transporter superfamily. Energy-coupling factor EcfA family. As to quaternary structure, forms a stable energy-coupling factor (ECF) transporter complex composed of 2 membrane-embedded substrate-binding proteins (S component), 2 ATP-binding proteins (A component) and 2 transmembrane proteins (T component).

It is found in the cell membrane. ATP-binding (A) component of a common energy-coupling factor (ECF) ABC-transporter complex. Unlike classic ABC transporters this ECF transporter provides the energy necessary to transport a number of different substrates. The protein is Energy-coupling factor transporter ATP-binding protein EcfA2 of Mycoplasma mobile (strain ATCC 43663 / 163K / NCTC 11711) (Mesomycoplasma mobile).